The following is a 343-amino-acid chain: Probable dual-specificity RNA methyltransferase RlmN (343 aa).

The active-site Proton acceptor is the E92. The Radical SAM core domain occupies 98 to 328; it reads YHHGLTACIS…TTVRREMGAD (231 aa). C105 and C333 are disulfide-bonded. [4Fe-4S] cluster contacts are provided by C112, C116, and C119. S-adenosyl-L-methionine is bound by residues 159–160, S191, 214–216, and N290; these read GE and SLH. C333 serves as the catalytic S-methylcysteine intermediate.

This sequence belongs to the radical SAM superfamily. RlmN family. [4Fe-4S] cluster serves as cofactor.

It is found in the cytoplasm. The enzyme catalyses adenosine(2503) in 23S rRNA + 2 reduced [2Fe-2S]-[ferredoxin] + 2 S-adenosyl-L-methionine = 2-methyladenosine(2503) in 23S rRNA + 5'-deoxyadenosine + L-methionine + 2 oxidized [2Fe-2S]-[ferredoxin] + S-adenosyl-L-homocysteine. It catalyses the reaction adenosine(37) in tRNA + 2 reduced [2Fe-2S]-[ferredoxin] + 2 S-adenosyl-L-methionine = 2-methyladenosine(37) in tRNA + 5'-deoxyadenosine + L-methionine + 2 oxidized [2Fe-2S]-[ferredoxin] + S-adenosyl-L-homocysteine. Specifically methylates position 2 of adenine 2503 in 23S rRNA and position 2 of adenine 37 in tRNAs. This chain is Probable dual-specificity RNA methyltransferase RlmN, found in Alkaliphilus oremlandii (strain OhILAs) (Clostridium oremlandii (strain OhILAs)).